A 183-amino-acid chain; its full sequence is MRLLAFAVLALFAVTQAEEGARLLASKSLLNRYAVEGRDLTLQYNIYNVGSSAALDVELSDDSFPPEDFGIVSGMLNVKWDRIAPASNVSHTVVLRPLKAGYFNFTSATVTYLAQEDGPVVIGFTSAPGQGGILAQREFDRRFSPHFLDWAAFGVMTLPSIGVPLLLWYSSKRKYDTPKTKKN.

The first 17 residues, 1–17, serve as a signal peptide directing secretion; it reads MRLLAFAVLALFAVTQA. At 18–146 the chain is on the lumenal side; it reads EEGARLLASK…REFDRRFSPH (129 aa). Asn-88 carries an N-linked (GlcNAc...) asparagine glycan. The helical transmembrane segment at 147–167 threads the bilayer; the sequence is FLDWAAFGVMTLPSIGVPLLL. Residues 168–183 lie on the Cytoplasmic side of the membrane; it reads WYSSKRKYDTPKTKKN.

The protein belongs to the TRAP-beta family. As to quaternary structure, heterotetramer of TRAP-alpha, TRAP-beta, TRAP-delta and TRAP-gamma. Interacts with STING1.

It localises to the endoplasmic reticulum membrane. Its function is as follows. TRAP proteins are part of a complex whose function is to bind calcium to the ER membrane and thereby regulate the retention of ER resident proteins. In Bos taurus (Bovine), this protein is Translocon-associated protein subunit beta (SSR2).